The sequence spans 275 residues: Formamidopyrimidine-DNA glycosylase (275 aa).

Proline 2 serves as the catalytic Schiff-base intermediate with DNA. Residue glutamate 3 is the Proton donor of the active site. The active-site Proton donor; for beta-elimination activity is lysine 58. Histidine 92, arginine 111, and arginine 154 together coordinate DNA. The FPG-type zinc finger occupies 239–273; the sequence is HVYHRQGLPCQRCGTPIERIKVAQRGTHFCPHCQV. Catalysis depends on arginine 263, which acts as the Proton donor; for delta-elimination activity.

It belongs to the FPG family. As to quaternary structure, monomer. It depends on Zn(2+) as a cofactor.

The catalysed reaction is Hydrolysis of DNA containing ring-opened 7-methylguanine residues, releasing 2,6-diamino-4-hydroxy-5-(N-methyl)formamidopyrimidine.. It catalyses the reaction 2'-deoxyribonucleotide-(2'-deoxyribose 5'-phosphate)-2'-deoxyribonucleotide-DNA = a 3'-end 2'-deoxyribonucleotide-(2,3-dehydro-2,3-deoxyribose 5'-phosphate)-DNA + a 5'-end 5'-phospho-2'-deoxyribonucleoside-DNA + H(+). Its function is as follows. Involved in base excision repair of DNA damaged by oxidation or by mutagenic agents. Acts as a DNA glycosylase that recognizes and removes damaged bases. Has a preference for oxidized purines, such as 7,8-dihydro-8-oxoguanine (8-oxoG). Has AP (apurinic/apyrimidinic) lyase activity and introduces nicks in the DNA strand. Cleaves the DNA backbone by beta-delta elimination to generate a single-strand break at the site of the removed base with both 3'- and 5'-phosphates. The polypeptide is Formamidopyrimidine-DNA glycosylase (Pediococcus pentosaceus (strain ATCC 25745 / CCUG 21536 / LMG 10740 / 183-1w)).